A 342-amino-acid polypeptide reads, in one-letter code: S-adenosylmethionine:tRNA ribosyltransferase-isomerase (342 aa).

It belongs to the QueA family. In terms of assembly, monomer.

The protein resides in the cytoplasm. It catalyses the reaction 7-aminomethyl-7-carbaguanosine(34) in tRNA + S-adenosyl-L-methionine = epoxyqueuosine(34) in tRNA + adenine + L-methionine + 2 H(+). The protein operates within tRNA modification; tRNA-queuosine biosynthesis. Transfers and isomerizes the ribose moiety from AdoMet to the 7-aminomethyl group of 7-deazaguanine (preQ1-tRNA) to give epoxyqueuosine (oQ-tRNA). This chain is S-adenosylmethionine:tRNA ribosyltransferase-isomerase, found in Streptococcus pyogenes serotype M49 (strain NZ131).